The primary structure comprises 669 residues: DNA mismatch repair protein MutL (669 aa).

The interval E357–S379 is disordered. The segment covering N361 to S379 has biased composition (polar residues).

This sequence belongs to the DNA mismatch repair MutL/HexB family.

Functionally, this protein is involved in the repair of mismatches in DNA. It is required for dam-dependent methyl-directed DNA mismatch repair. May act as a 'molecular matchmaker', a protein that promotes the formation of a stable complex between two or more DNA-binding proteins in an ATP-dependent manner without itself being part of a final effector complex. In Staphylococcus aureus (strain Mu3 / ATCC 700698), this protein is DNA mismatch repair protein MutL.